A 371-amino-acid chain; its full sequence is Bifunctional enzyme IspD/IspF (371 aa).

Positions 1-210 (MSEISLIMLA…LDLPTPSFEI (210 aa)) are 2-C-methyl-D-erythritol 4-phosphate cytidylyltransferase. Residues 211-371 (FTGNGFDVHE…NLKYFDWTRL (161 aa)) are 2-C-methyl-D-erythritol 2,4-cyclodiphosphate synthase. Residues Asp-217 and His-219 each contribute to the a divalent metal cation site. Residues 217-219 (DVH) and 243-244 (HS) contribute to the 4-CDP-2-C-methyl-D-erythritol 2-phosphate site. His-251 contacts a divalent metal cation. 4-CDP-2-C-methyl-D-erythritol 2-phosphate-binding positions include 265 to 267 (DIG), 270 to 274 (YPDTD), 341 to 344 (TTTE), Phe-348, and Arg-351.

The protein in the N-terminal section; belongs to the IspD/TarI cytidylyltransferase family. IspD subfamily. It in the C-terminal section; belongs to the IspF family. Requires a divalent metal cation as cofactor.

The catalysed reaction is 2-C-methyl-D-erythritol 4-phosphate + CTP + H(+) = 4-CDP-2-C-methyl-D-erythritol + diphosphate. It catalyses the reaction 4-CDP-2-C-methyl-D-erythritol 2-phosphate = 2-C-methyl-D-erythritol 2,4-cyclic diphosphate + CMP. It participates in isoprenoid biosynthesis; isopentenyl diphosphate biosynthesis via DXP pathway; isopentenyl diphosphate from 1-deoxy-D-xylulose 5-phosphate: step 2/6. The protein operates within isoprenoid biosynthesis; isopentenyl diphosphate biosynthesis via DXP pathway; isopentenyl diphosphate from 1-deoxy-D-xylulose 5-phosphate: step 4/6. In terms of biological role, bifunctional enzyme that catalyzes the formation of 4-diphosphocytidyl-2-C-methyl-D-erythritol from CTP and 2-C-methyl-D-erythritol 4-phosphate (MEP) (IspD), and catalyzes the conversion of 4-diphosphocytidyl-2-C-methyl-D-erythritol 2-phosphate (CDP-ME2P) to 2-C-methyl-D-erythritol 2,4-cyclodiphosphate (ME-CPP) with a corresponding release of cytidine 5-monophosphate (CMP) (IspF). In Campylobacter jejuni subsp. jejuni serotype O:23/36 (strain 81-176), this protein is Bifunctional enzyme IspD/IspF.